The primary structure comprises 121 residues: Prefoldin subunit beta (121 aa).

Belongs to the prefoldin subunit beta family. As to quaternary structure, heterohexamer of two alpha and four beta subunits.

It is found in the cytoplasm. In terms of biological role, molecular chaperone capable of stabilizing a range of proteins. Seems to fulfill an ATP-independent, HSP70-like function in archaeal de novo protein folding. The protein is Prefoldin subunit beta of Caldivirga maquilingensis (strain ATCC 700844 / DSM 13496 / JCM 10307 / IC-167).